The primary structure comprises 614 residues: UvrABC system protein C (614 aa).

One can recognise a GIY-YIG domain in the interval 26–104 (NLPGVYKMLG…IKEYRPPYNV (79 aa)). The UVR domain maps to 215-250 (SDIHTALIEKMEASAEELDFEKAVFYRDQLSMLREV).

The protein belongs to the UvrC family. In terms of assembly, interacts with UvrB in an incision complex.

The protein localises to the cytoplasm. Its function is as follows. The UvrABC repair system catalyzes the recognition and processing of DNA lesions. UvrC both incises the 5' and 3' sides of the lesion. The N-terminal half is responsible for the 3' incision and the C-terminal half is responsible for the 5' incision. This chain is UvrABC system protein C, found in Psychrobacter cryohalolentis (strain ATCC BAA-1226 / DSM 17306 / VKM B-2378 / K5).